The sequence spans 321 residues: Ribosomal RNA small subunit methyltransferase H (321 aa).

Residues 33–35 (AGH), Asp58, Phe85, Asp111, and Gln118 contribute to the S-adenosyl-L-methionine site.

It belongs to the methyltransferase superfamily. RsmH family.

It localises to the cytoplasm. The enzyme catalyses cytidine(1402) in 16S rRNA + S-adenosyl-L-methionine = N(4)-methylcytidine(1402) in 16S rRNA + S-adenosyl-L-homocysteine + H(+). Specifically methylates the N4 position of cytidine in position 1402 (C1402) of 16S rRNA. This chain is Ribosomal RNA small subunit methyltransferase H, found in Chloroherpeton thalassium (strain ATCC 35110 / GB-78).